A 488-amino-acid polypeptide reads, in one-letter code: Cobyric acid synthase (488 aa).

Positions 247 to 440 constitute a GATase cobBQ-type domain; it reads LLRVIVPVLP…VHGVFDEPTA (194 aa). Catalysis depends on Cys328, which acts as the Nucleophile. Residue His432 is part of the active site.

This sequence belongs to the CobB/CobQ family. CobQ subfamily.

It participates in cofactor biosynthesis; adenosylcobalamin biosynthesis. Functionally, catalyzes amidations at positions B, D, E, and G on adenosylcobyrinic A,C-diamide. NH(2) groups are provided by glutamine, and one molecule of ATP is hydrogenolyzed for each amidation. The protein is Cobyric acid synthase of Cupriavidus pinatubonensis (strain JMP 134 / LMG 1197) (Cupriavidus necator (strain JMP 134)).